The following is a 516-amino-acid chain: L-amino-acid oxidase (516 aa).

Residues 1–18 (MNVFFMFSLLFLAALGSC) form the signal peptide. A disulfide bridge links cysteine 28 with cysteine 189. Residues 61-62 (MA), 81-82 (EA), arginine 89, and 103-106 (GPMR) each bind FAD. Residues arginine 106 and histidine 239 each contribute to the substrate site. FAD is bound at residue valine 279. Cysteine 349 and cysteine 430 form a disulfide bridge. Asparagine 379 is a glycosylation site (N-linked (GlcNAc...) asparagine). Position 390 (tyrosine 390) interacts with substrate. FAD contacts are provided by residues glutamate 475 and 482–487 (GWIDST). Position 482–483 (482–483 (GW)) interacts with substrate.

Belongs to the flavin monoamine oxidase family. FIG1 subfamily. In terms of assembly, homodimer; non-covalently linked. FAD is required as a cofactor. In terms of processing, N-glycosylated. As to expression, expressed by the venom gland.

The protein localises to the secreted. It carries out the reaction an L-alpha-amino acid + O2 + H2O = a 2-oxocarboxylate + H2O2 + NH4(+). It catalyses the reaction L-leucine + O2 + H2O = 4-methyl-2-oxopentanoate + H2O2 + NH4(+). The catalysed reaction is L-phenylalanine + O2 + H2O = 3-phenylpyruvate + H2O2 + NH4(+). The enzyme catalyses L-methionine + O2 + H2O = 4-methylsulfanyl-2-oxobutanoate + H2O2 + NH4(+). It carries out the reaction L-arginine + O2 + H2O = 5-guanidino-2-oxopentanoate + H2O2 + NH4(+). In terms of biological role, catalyzes an oxidative deamination of predominantly hydrophobic and aromatic L-amino acids, thus producing hydrogen peroxide that may contribute to the diverse toxic effects of this enzyme. Is active on L-Arg, L-Phe, L-Met, and L-Leu and is weakly active on L-Val. Exhibits diverse biological activities, such as hemorrhage, hemolysis, edema, apoptosis of vascular endothelial cells or tumor cell lines, antibacterial and antiparasitic activities, as well as regulation of platelet aggregation. Its effect on platelets is controversial, since it either induces aggregation or inhibits agonist-induced aggregation. These different effects are probably due to different experimental conditions. The protein is L-amino-acid oxidase of Crotalus adamanteus (Eastern diamondback rattlesnake).